A 121-amino-acid chain; its full sequence is Large ribosomal subunit protein mL52 (121 aa).

The N-terminal 22 residues, Met1–Ala22, are a transit peptide targeting the mitochondrion. A compositionally biased stretch (basic and acidic residues) spans Gln98–Pro109. The interval Gln98–Gln121 is disordered.

This sequence belongs to the mitochondrion-specific ribosomal protein mL52 family. In terms of assembly, component of the mitochondrial ribosome large subunit (39S) which comprises a 16S rRNA and about 50 distinct proteins.

Its subcellular location is the mitochondrion. The chain is Large ribosomal subunit protein mL52 (Mrpl52) from Mus musculus (Mouse).